Here is a 307-residue protein sequence, read N- to C-terminus: MSLNFFLRRYTVFPWSRKLGQYYHDAKRESSAWTESFHPFDEDLSKAALTFCITALLASLAYFLRQKEIVRLGCDLMNIFYVFDECADIADKEGASQIRDVVMDDLHRPEKTCPGGEILPGEMVKYVLLLCPEIPETYYNTKSFGFAPQSSSPQPHIVCATLSRISMPTQQQWFNVKRTIGPNVFLARSATVLPYAETHTFYHPRMIALREQAPFLDINSYPMKVRGLVQGSINWLEGYAAGVQAAFLDNIANLPSCAKEVESRVNIYVNELAQWARGNDDWTFESGRYFGDRGPENQSDIPTSSNR.

The disordered stretch occupies residues 287–307; that stretch reads GRYFGDRGPENQSDIPTSSNR. The span at 296-307 shows a compositional bias: polar residues; that stretch reads ENQSDIPTSSNR.

Belongs to the terpene synthase family.

This Cyclocybe aegerita (Black poplar mushroom) protein is Sesquiterpene synthase-like protein Agr10.